The primary structure comprises 147 residues: Hemoglobin subunit beta (147 aa).

Val2 is subject to N-acetylvaline. The Globin domain occupies 3–147; the sequence is HLADDEKAAV…VSTALAHKYH (145 aa). A Phosphoserine modification is found at Ser45. The residue at position 60 (Lys60) is an N6-acetyllysine. Residue His64 participates in heme b binding. Residue Lys83 is modified to N6-acetyllysine. His93 serves as a coordination point for heme b. Cys94 carries the S-nitrosocysteine modification. At Lys145 the chain carries N6-acetyllysine.

This sequence belongs to the globin family. In terms of assembly, heterotetramer of two alpha chains and two beta chains. Red blood cells.

Functionally, involved in oxygen transport from the lung to the various peripheral tissues. This chain is Hemoglobin subunit beta (HBB), found in Bradypus tridactylus (Pale-throated three-toed sloth).